The chain runs to 742 residues: Zinc finger MYND domain-containing protein 15 (742 aa).

Residues 109–199 (LEDGEEGEEE…QKRKGQRSEA (91 aa)) form a disordered region. The span at 110-127 (EDGEEGEEEEEEDEEEEK) shows a compositional bias: acidic residues. Over residues 151–161 (SRESPQETNPP) the composition is skewed to polar residues. Residues 166–189 (EAAREAGGGKDGCREDRVENETRP) show a composition bias toward basic and acidic residues. The Zn(2+) site is built by cysteine 313, cysteine 316, cysteine 328, cysteine 331, cysteine 337, cysteine 341, histidine 355, and cysteine 359. The MYND-type zinc-finger motif lies at 313–359 (CHVCHRHSFEAKLTPCPQCSAVLYCGEACLRADWQRCPDDVSHRFWC). 2 disordered regions span residues 565 to 590 (EVSVRPGSGISARPSSGTKEKGGRRD) and 701 to 742 (QGSG…RRRK). Positions 708 to 724 (APGPPPPSPTPSAPPAP) are enriched in pro residues. Residues 725-742 (TRRRRGEKKPGRGARRRK) are compositionally biased toward basic residues.

In terms of assembly, interacts with HDAC1, HDAC3, HDAC6 and, to a lesser extent, with HDAC7.

It localises to the nucleus. It is found in the cytoplasm. Acts as a transcriptional repressor through interaction with histone deacetylases (HDACs). May be important for spermiogenesis. This chain is Zinc finger MYND domain-containing protein 15 (ZMYND15), found in Homo sapiens (Human).